The chain runs to 79 residues: ATP synthase subunit 9, mitochondrial (79 aa).

Helical transmembrane passes span 21–41 (SGLI…ILAF) and 59–79 (FALT…ILFI).

Belongs to the ATPase C chain family. F-type ATPases have 2 components, CF(1) - the catalytic core - and CF(0) - the membrane proton channel. CF(1) has five subunits: alpha(3), beta(3), gamma(1), delta(1), epsilon(1). CF(0) has three main subunits: a, b and c.

It is found in the mitochondrion membrane. Functionally, mitochondrial membrane ATP synthase (F(1)F(0) ATP synthase or Complex V) produces ATP from ADP in the presence of a proton gradient across the membrane which is generated by electron transport complexes of the respiratory chain. F-type ATPases consist of two structural domains, F(1) - containing the extramembraneous catalytic core and F(0) - containing the membrane proton channel, linked together by a central stalk and a peripheral stalk. During catalysis, ATP synthesis in the catalytic domain of F(1) is coupled via a rotary mechanism of the central stalk subunits to proton translocation. Part of the complex F(0) domain. A homomeric c-ring of probably 10 subunits is part of the complex rotary element. The polypeptide is ATP synthase subunit 9, mitochondrial (ATP9) (Acanthamoeba castellanii (Amoeba)).